A 754-amino-acid chain; its full sequence is MLAPSSNCSLASQRLTPEGFAQLQSALQDFVATLPQAFYWDSRSLHTHLRTQTGDCAIAIAAGFQLLLLGRTAAEYCQPHPLSEPHHVSVQFGADSIQRYCQATNLPVEYQPALAQLGDLSLNPDLISQFSNLLIAAIAADRAPLAAQYPAVSVCQPLEQALHWQEEQDRLISQVSAQIRLSLDLSEILTTTIREIRQLLNADRAIIYQFKPQCLDAGLDQRWPLYIPSQSYITYEDRRNEALLSVIDPLVQPGLLITTEEWQRFQQGETLLIDSVGFYKERLPEQYSFYERVQVRSVCKIPILVQGRIWGLLVAHQCQQDHRWQPRERDILQHLAEHLSIAIYQAQLYGQLQDQTQTLENRVLERTQELIDALALAQAANAAKGEFLATMSHELRTPLTCVIGMSSTLLRWAFGPLTERQREYIKAIHDSGEHLLELINDILDLSQIEAGKAALQVRPFSLSRLATQTLNTLQEKARLGEIQLMLDLQLNNRVDVFRADPKRLRQILINLLSNAVKFTEPQGTVFLRVWREGDRAIFQVSDTGIGIPESEQAQLFQKFQQLDTSIRRQYGGTGLGLALTKQLVELHGGHIQIESTVGQGSTFTVWIPEQTLIEPVEPRPSIDNLPAGHILLLEEEDEAATVVCEMLTAAGFKVIWLVDGSTALDQLDLLQPIVILMAWPPPDQSCLLLLQHLREHQADPHPPLVLFLGEPPVDPLLTAQASAILSKPLDPQLLLTTLQGLCPPNLSEGDRPSS.

The tract at residues 1–183 (MLAPSSNCSL…QVSAQIRLSL (183 aa)) is N-terminal domain, not required to complement the deletion strain. The segment at 184–338 (DLSEILTTTI…RDILQHLAEH (155 aa)) is GAF domain, required to complement the deletion strain. In terms of domain architecture, Histidine kinase spans 390-611 (TMSHELRTPL…TFTVWIPEQT (222 aa)). A Phosphohistidine; by autocatalysis modification is found at His-393. Residues 606–754 (WIPEQTLIEP…NLSEGDRPSS (149 aa)) are psR domain, required to complement the deletion strain and for cell pole localization, attenuates autophosphorylation activity. Binds KaiB(fs). Positions 629–742 (HILLLEEEDE…LLLTTLQGLC (114 aa)) constitute a Response regulatory domain.

It in the N-terminal section; belongs to the phytochrome family. In terms of assembly, homodimer. Part of the circadian clock (KaiA, KaiB, KaiC, CikA, RpaA, SasA), the composition of which varies during the circadian cycle. Interacts with LdpA. KaiA and CikA compete for binding to KaiB(fs).

Its subcellular location is the cytoplasm. It localises to the membrane. The catalysed reaction is ATP + protein L-histidine = ADP + protein N-phospho-L-histidine.. Functionally, functions in an input pathway to the Kai circadian clock. Senses oxidized quinones via its C-terminal pseudo-receiver domain, providing a link between cell metabolism and the clock. Affects the ratio of phosphorylated to unphosphorylated KaiC, binds quinones via its pseudo-receptor domain. Quinone-binding destabilizes the protein rapidly. Autophosphorylates, does not transfer the phosphate to its pseudo-receiver (PsR) domain. May play a role in cell division, as suggested by its polar location and increased cell length in a deletion strain. Its function is as follows. Member of the two-component regulatory system CikA/RpaA output pathway from the circadian clock, negatively regulating kaiBC expression independently of labA and of sasA. One of three clock output pathways. Dephosphorylates phospho-RpaA, enhanced by KaiB and KaiC, has only modest kinase activity on RpaA. A very robust clock is reconstituted with KaiA, KaiB, KaiC, SasA, CikA and RpaA; output is measured by transcription from an appropriate reporter. This chain is Circadian input-output histidine kinase CikA, found in Synechococcus elongatus (strain ATCC 33912 / PCC 7942 / FACHB-805) (Anacystis nidulans R2).